Reading from the N-terminus, the 240-residue chain is Protein GrpE (240 aa).

A compositionally biased stretch (polar residues) spans 1–13; that stretch reads MTDNQRQSTTDGQ. Residues 1 to 89 are disordered; sequence MTDNQRQSTT…DAEQKAEEHW (89 aa). Low complexity predominate over residues 20–38; the sequence is AQATAEAAEQTQATQASAA. Residues 65-89 show a composition bias toward basic and acidic residues; the sequence is EALRQRVEELEKALADAEQKAEEHW.

This sequence belongs to the GrpE family. In terms of assembly, homodimer.

It is found in the cytoplasm. Functionally, participates actively in the response to hyperosmotic and heat shock by preventing the aggregation of stress-denatured proteins, in association with DnaK and GrpE. It is the nucleotide exchange factor for DnaK and may function as a thermosensor. Unfolded proteins bind initially to DnaJ; upon interaction with the DnaJ-bound protein, DnaK hydrolyzes its bound ATP, resulting in the formation of a stable complex. GrpE releases ADP from DnaK; ATP binding to DnaK triggers the release of the substrate protein, thus completing the reaction cycle. Several rounds of ATP-dependent interactions between DnaJ, DnaK and GrpE are required for fully efficient folding. The protein is Protein GrpE of Halorhodospira halophila (strain DSM 244 / SL1) (Ectothiorhodospira halophila (strain DSM 244 / SL1)).